We begin with the raw amino-acid sequence, 1312 residues long: Tetratricopeptide repeat protein 21B (1312 aa).

TPR repeat units follow at residues 4–38 (TDHYITAGIIYYCQEKYHQHVQNLAREGLKKYSND), 110–143 (PKALYYAGMFLWLMGRTDKAREYIDRMLKISNRS), 147–180 (LVLRGWLDLSSEKESTVNKSIRYFEEGIQDNKDI), 182–213 (ALIGKAQYFMAHQNYSGALDVINQIIVNYPPF), 214–247 (LPALTLKMRLFLAQQDWDQTLETAQRILLKDGAN), and 325–358 (AEVATALANNFILQGNVTEAAGWYATAMKLDGNH). Positions 365–392 (VIQCQILQGQLEEAEQQLDFLHEIQESI) form a coiled coil. TPR repeat units lie at residues 493 to 526 (TEPLYYTAQIKYLAGNLEGAQGSLQRCIEVDTAC), 528 to 560 (DFHLLMAQIHYAQGKFAECSVSLETGVSHNFKV), 564 to 597 (PLYHLIRARVLRKTGELQEAIKTLKMTMSLQEMK), 615 to 648 (VSIYLELAELLRLNGEQHEATKIIQDAINEFGGT), 720 to 753 (PHTSVLLGDALMNIQEPEKALEVYNEALHKNPQD), 755 to 787 (SLANRIGQALIKTHQYKKAVNYYEAAQKISGQD), 789 to 820 (LCCDLAELLIKLKQYSKAEAVLKQALAHEPVS), 829 to 861 (AKCLGLLGTTYQNYKKEESADILNKALELQQRI), 881 to 914 (SEICVQLAEHYVDQRNYEQAANYYKEAMVYSQDS), 916 to 947 (VKLQLSRLYLMMGDLDSCENHCSALLENHSFK), 948 to 981 (EEAAMMMADVMFRKQDYTKSIELFDQILEENPDN), 983 to 1015 (AVLSKLIDLLRRSGNLSKAPMFFEKALANSSRT), 1019 to 1052 (PGYNYCKGLYCWYLGQPNDGLKYFNKARKDSEWG), 1193 to 1226 (EKSWLLLADVYIKLGKYDIATELLKRCLLYNKSC), 1228 to 1260 (KAYEYLGFIMENEQSYKDAAANYRLAWDYSNQS), and 1262 to 1295 (PAVGFRLAFNYLKDKKYVDAIDICHKVLKAHPTY).

This sequence belongs to the TTC21 family. As to quaternary structure, component of the IFT complex A (IFT-A).

Functionally, component of the IFT complex A (IFT-A), a complex required for retrograde ciliary transport and entry into cilia of G protein-coupled receptors (GPCRs). Negatively modulates the SHH signal transduction. In Xenopus laevis (African clawed frog), this protein is Tetratricopeptide repeat protein 21B (ttc21b).